A 326-amino-acid polypeptide reads, in one-letter code: Metal-binding protein YtgA (326 aa).

The first 21 residues, Met-1–Gly-21, serve as a signal peptide directing secretion. Fe(2+) is bound by residues His-75, His-141, His-207, and Asp-299.

The protein belongs to the bacterial solute-binding protein 9 family. As to quaternary structure, monomer.

It is found in the periplasm. Functionally, part of the ATP-binding cassette (ABC) transport system YtgABCD involved in metal import. Binds Fe(2+), Mn(2+) and Ni(2+), with a preference for Fe(2+) and delivers them to the membrane permease for translocation into the cytoplasm. The polypeptide is Metal-binding protein YtgA (Chlamydia muridarum (strain MoPn / Nigg)).